The chain runs to 349 residues: UDP-3-O-acylglucosamine N-acyltransferase (349 aa).

The active-site Proton acceptor is histidine 242.

The protein belongs to the transferase hexapeptide repeat family. LpxD subfamily. In terms of assembly, homotrimer.

The enzyme catalyses a UDP-3-O-[(3R)-3-hydroxyacyl]-alpha-D-glucosamine + a (3R)-hydroxyacyl-[ACP] = a UDP-2-N,3-O-bis[(3R)-3-hydroxyacyl]-alpha-D-glucosamine + holo-[ACP] + H(+). It participates in bacterial outer membrane biogenesis; LPS lipid A biosynthesis. Its function is as follows. Catalyzes the N-acylation of UDP-3-O-acylglucosamine using 3-hydroxyacyl-ACP as the acyl donor. Is involved in the biosynthesis of lipid A, a phosphorylated glycolipid that anchors the lipopolysaccharide to the outer membrane of the cell. The polypeptide is UDP-3-O-acylglucosamine N-acyltransferase (Cytophaga hutchinsonii (strain ATCC 33406 / DSM 1761 / CIP 103989 / NBRC 15051 / NCIMB 9469 / D465)).